A 266-amino-acid chain; its full sequence is Trypsin 5G1 (266 aa).

A signal peptide spans 1–18; it reads MTRIILILTATFFACALG. Residues 19-39 constitute a propeptide, activation peptide; that stretch reads ASTGGSHPLRPWWNALRSSGR. Residues 40–265 form the Peptidase S1 domain; sequence IVGGFEVPVE…VRDWVKEVSG (226 aa). An intrachain disulfide couples C66 to C82. Active-site charge relay system residues include H81 and D125. 2 disulfide bridges follow: C190/C206 and C217/C241. The Charge relay system role is filled by S221.

The protein belongs to the peptidase S1 family. In terms of tissue distribution, midgut.

The protein resides in the secreted. It localises to the extracellular space. The enzyme catalyses Preferential cleavage: Arg-|-Xaa, Lys-|-Xaa.. In terms of biological role, major function may be to aid in digestion of the blood meal. In Aedes aegypti (Yellowfever mosquito), this protein is Trypsin 5G1.